We begin with the raw amino-acid sequence, 440 residues long: Murein DD-endopeptidase MepM (440 aa).

Residues 21-40 (VMLGSLTVLTLAVAVWRPYV) traverse the membrane as a helical segment. The region spanning 96–141 (HEYVVSTGDTLSSILNQYGIDMGDITQLAAADKELRNLKIGQQLSW) is the LysM domain. Residue H314 coordinates Zn(2+).

The protein belongs to the peptidase M23B family. Zn(2+) is required as a cofactor.

It localises to the cell membrane. Its pathway is cell wall biogenesis; cell wall polysaccharide biosynthesis. Functionally, a murein DD-endopeptidase with specificity for D-Ala-meso-diaminopimelic acid (mDAP) cross-links. Its role is probably to cleave D-Ala-mDAP cross-links to allow insertion of new glycans and thus cell wall expansion. Functionally redundant with MepM and MepH. This is Murein DD-endopeptidase MepM (mepM) from Escherichia coli O6:H1 (strain CFT073 / ATCC 700928 / UPEC).